An 856-amino-acid polypeptide reads, in one-letter code: DNA mismatch repair protein MutS (856 aa).

Residue 623–630 (GPNMSGKS) participates in ATP binding.

It belongs to the DNA mismatch repair MutS family.

This protein is involved in the repair of mismatches in DNA. It is possible that it carries out the mismatch recognition step. This protein has a weak ATPase activity. This is DNA mismatch repair protein MutS from Natronomonas pharaonis (strain ATCC 35678 / DSM 2160 / CIP 103997 / JCM 8858 / NBRC 14720 / NCIMB 2260 / Gabara) (Halobacterium pharaonis).